We begin with the raw amino-acid sequence, 612 residues long: 1,8-cineole synthase, chloroplastic (612 aa).

Residues 1-52 (MALVSVAPLASRSCLSKSLISSTHELKPLRRTILPTLRWKSATPSINMCLTT) constitute a chloroplast transit peptide. 3 residues coordinate Mg(2+): aspartate 363, aspartate 367, and aspartate 515. A DDXXD motif motif is present at residues 363–367 (DDIYD).

The protein belongs to the terpene synthase family. Tpsd subfamily. Mg(2+) is required as a cofactor. Mn(2+) serves as cofactor.

The protein resides in the plastid. It is found in the chloroplast. It catalyses the reaction (2E)-geranyl diphosphate + H2O = 1,8-cineole + diphosphate. It participates in terpene metabolism; oleoresin biosynthesis. In terms of biological role, terpene synthase (TPS) involved in the biosynthesis of monoterpene natural products included in conifer oleoresin secretions and volatile emissions; these compounds contribute to biotic and abiotic stress defense against herbivores and pathogens. Catalyzes the conversion of (2E)-geranyl diphosphate (GPP) to 1,8-cineole. The sequence is that of 1,8-cineole synthase, chloroplastic from Picea sitchensis (Sitka spruce).